Reading from the N-terminus, the 512-residue chain is Maturase K (512 aa).

Belongs to the intron maturase 2 family. MatK subfamily.

The protein resides in the plastid. Its subcellular location is the chloroplast. Functionally, usually encoded in the trnK tRNA gene intron. Probably assists in splicing its own and other chloroplast group II introns. The sequence is that of Maturase K from Lilium tsingtauense (Twilight lily).